Reading from the N-terminus, the 215-residue chain is SAGA complex/transcription factor TFIID complex subunit Taf10 (215 aa).

Residues 1 to 77 (MSDINNNEPA…SRERHGSNYV (77 aa)) are disordered. The span at 23–42 (GNNSMSVDEQPETSSTNLPT) shows a compositional bias: polar residues. Residues 58 to 73 (NNEDSPKSDDSRERHG) are compositionally biased toward basic and acidic residues. One can recognise a Histone-fold domain in the interval 58-203 (NNEDSPKSDD…VDDLSAALNE (146 aa)).

Belongs to the TAF10 family. In terms of assembly, component of the 1.8 MDa SAGA (Spt-Ada-Gcn5 acetyltransferase) complex, which is composed of 19 subunits tra1, spt7, taf5, ngg1/ada3, sgf73, spt20, spt8, taf12, taf6, hfi1/ada1, ubp8, gcn5, ada2, spt3, sgf29, taf10, taf9, sgf11 and sus1. The SAGA complex is composed of 4 modules, namely the HAT (histone acetyltransferase) module (gcn5, ada2, ngg1/ada3 and sgf29), the DUB (deubiquitinating) module (ubp8, sgf11, sgf73 and sus1), the core or TAF (TBP-associated factor) module (taf5, taf6, taf9, taf10 and taf12), and the Tra1 or SPT (Suppressor of Ty) module (tra1, hfi1/ada1, spt3, spt7, spt8 and spt20). The Tra1/SPT module binds activators, the core module recruits TBP (TATA-binding protein), the HAT module contains the histone H3 acetyltransferase gcn5, and the DUB module comprises the histone H2B deubiquitinase ubp8. Component of the 1.2 MDa TFIID complex, which is composed of TATA-binding protein (TBP) and the 14 TBP-associated factors (TAFs). It comprises 1 copy of each taf1, taf2, taf3, taf7, taf8, taf11, taf13, 2 copies of each taf4, taf5, taf6, taf9, taf10, taf12, and 3 copies of taf14. In TFIID, taf10 heterodimerizes with taf3 and taf8.

It localises to the nucleus. Functions as a component of both the DNA-binding general transcription initiation factor complex TFIID and the transcription coactivator SAGA complex. Binding of TFIID to a promoter (with or without TATA element) is the initial step in pre-initiation complex (PIC) formation. TFIID plays a key role in the regulation of gene expression by RNA polymerase II through different activities such as transcription activator interaction, core promoter recognition and selectivity, TFIIA and TFIIB interaction, chromatin modification (histone acetylation by TAF1), facilitation of DNA opening and initiation of transcription. SAGA acts as a general cofactor required for essentially all RNA polymerase II transcription. At the promoters, SAGA is required for transcription pre-initiation complex (PIC) recruitment. It influences RNA polymerase II transcriptional activity through different activities such as TBP interaction (via core/TAF module) and promoter selectivity, interaction with transcription activators (via Tra1/SPT module), and chromatin modification through histone acetylation (via HAT module) and deubiquitination (via DUB module). SAGA preferentially acetylates histones H3 (to form H3K9ac, H3K14ac, H3K18ac and H3K23ac) and H2B and deubiquitinates histone H2B. SAGA interacts with DNA via upstream activating sequences (UASs). In Schizosaccharomyces pombe (strain 972 / ATCC 24843) (Fission yeast), this protein is SAGA complex/transcription factor TFIID complex subunit Taf10.